The following is a 266-amino-acid chain: Phosphatidylglycerol--prolipoprotein diacylglyceryl transferase (266 aa).

The next 7 helical transmembrane spans lie at 10–30 (VAIA…LVGI), 56–76 (LVFW…VFFY), 92–112 (WEGG…TWWF), 120–140 (FFEL…AGRI), 172–192 (PSQL…LWFY), 200–220 (MAVS…VEFV), and 234–254 (WLTM…GLIA). Arginine 139 is an a 1,2-diacyl-sn-glycero-3-phospho-(1'-sn-glycerol) binding site.

The protein belongs to the Lgt family.

Its subcellular location is the cell inner membrane. The catalysed reaction is L-cysteinyl-[prolipoprotein] + a 1,2-diacyl-sn-glycero-3-phospho-(1'-sn-glycerol) = an S-1,2-diacyl-sn-glyceryl-L-cysteinyl-[prolipoprotein] + sn-glycerol 1-phosphate + H(+). The protein operates within protein modification; lipoprotein biosynthesis (diacylglyceryl transfer). Functionally, catalyzes the transfer of the diacylglyceryl group from phosphatidylglycerol to the sulfhydryl group of the N-terminal cysteine of a prolipoprotein, the first step in the formation of mature lipoproteins. The protein is Phosphatidylglycerol--prolipoprotein diacylglyceryl transferase of Ectopseudomonas mendocina (strain ymp) (Pseudomonas mendocina).